A 341-amino-acid chain; its full sequence is UDP-3-O-acylglucosamine N-acyltransferase (341 aa).

Histidine 239 acts as the Proton acceptor in catalysis.

Belongs to the transferase hexapeptide repeat family. LpxD subfamily. In terms of assembly, homotrimer.

The catalysed reaction is a UDP-3-O-[(3R)-3-hydroxyacyl]-alpha-D-glucosamine + a (3R)-hydroxyacyl-[ACP] = a UDP-2-N,3-O-bis[(3R)-3-hydroxyacyl]-alpha-D-glucosamine + holo-[ACP] + H(+). The protein operates within bacterial outer membrane biogenesis; LPS lipid A biosynthesis. Catalyzes the N-acylation of UDP-3-O-acylglucosamine using 3-hydroxyacyl-ACP as the acyl donor. Is involved in the biosynthesis of lipid A, a phosphorylated glycolipid that anchors the lipopolysaccharide to the outer membrane of the cell. The protein is UDP-3-O-acylglucosamine N-acyltransferase of Shewanella sp. (strain MR-7).